A 214-amino-acid chain; its full sequence is Small ribosomal subunit protein uS5 (214 aa).

The 64-residue stretch at 54 to 117 folds into the S5 DRBM domain; sequence LKYEVVDIKV…RDAKMNILPV (64 aa).

Belongs to the universal ribosomal protein uS5 family. Part of the 30S ribosomal subunit. Contacts protein S4.

With S4 and S12 plays an important role in translational accuracy. The protein is Small ribosomal subunit protein uS5 of Saccharolobus islandicus (strain Y.N.15.51 / Yellowstone #2) (Sulfolobus islandicus).